A 176-amino-acid chain; its full sequence is Transcription termination/antitermination protein NusG (176 aa).

The KOW domain occupies 125 to 149; it reads GEVVRVVEGPFANFTATVEEYDVEH.

This sequence belongs to the NusG family.

Its function is as follows. Participates in transcription elongation, termination and antitermination. The polypeptide is Transcription termination/antitermination protein NusG (Helicobacter pylori (strain ATCC 700392 / 26695) (Campylobacter pylori)).